We begin with the raw amino-acid sequence, 520 residues long: Calcium and calcium/calmodulin-dependent serine/threonine-protein kinase (520 aa).

The Protein kinase domain occupies 13–302 (YEVVDVLGKG…ANDLLKHPWV (290 aa)). ATP contacts are provided by residues 19–27 (LGKGGFSVV) and lysine 44. The Proton acceptor role is filled by aspartate 167. Residues 227–243 (MWSLGVILYILLSGCPP) form a helical membrane-spanning segment. Threonine 267 is subject to Phosphothreonine; by autocatalysis. The segment at 325–338 (ARRKLRAAAIASVL) is calmodulin-binding. The stretch at 346 to 368 (TKKLKNLLGSHDMKSEELENLRA) forms a coiled coil. EF-hand domains are found at residues 361 to 395 (EELE…MKMN), 396 to 431 (SLIP…LRNS), 432 to 467 (QGDD…LPED), and 474 to 509 (TEPG…DSSL). Residues aspartate 409, asparagine 411, aspartate 413, threonine 415, glutamate 420, aspartate 445, aspartate 447, serine 449, cysteine 451, glutamate 456, aspartate 487, asparagine 489, aspartate 491, and glutamate 498 each coordinate Ca(2+).

The protein belongs to the protein kinase superfamily. CAMK Ser/Thr protein kinase family. CaMK subfamily. In terms of processing, autophosphorylation stimulated by calcium and inhibited by calcium/calmodulin. Occurs probably by an intermolecular mechanism.

The protein localises to the membrane. It carries out the reaction L-seryl-[protein] + ATP = O-phospho-L-seryl-[protein] + ADP + H(+). The enzyme catalyses L-threonyl-[protein] + ATP = O-phospho-L-threonyl-[protein] + ADP + H(+). Its activity is regulated as follows. Activated by calcium/calmodulin binding after calcium-induced autophosphorylation. Autophosphorylation is associated with a time-dependent loss of kinase activity sensitive to reaction pH and ATP concentration. In vitro inactivation leads to the formation of network-like structures. Functionally, protein kinase that may be involved in microsporogenesis. The sequence is that of Calcium and calcium/calmodulin-dependent serine/threonine-protein kinase (CCAMK) from Lilium longiflorum (Trumpet lily).